A 300-amino-acid chain; its full sequence is 4-diphosphocytidyl-2-C-methyl-D-erythritol kinase (300 aa).

The active site involves Lys12. Residue 94-104 (PAQAGIGGGSS) coordinates ATP. The active site involves Asp136.

It belongs to the GHMP kinase family. IspE subfamily.

The enzyme catalyses 4-CDP-2-C-methyl-D-erythritol + ATP = 4-CDP-2-C-methyl-D-erythritol 2-phosphate + ADP + H(+). It participates in isoprenoid biosynthesis; isopentenyl diphosphate biosynthesis via DXP pathway; isopentenyl diphosphate from 1-deoxy-D-xylulose 5-phosphate: step 3/6. Functionally, catalyzes the phosphorylation of the position 2 hydroxy group of 4-diphosphocytidyl-2C-methyl-D-erythritol. The protein is 4-diphosphocytidyl-2-C-methyl-D-erythritol kinase of Verminephrobacter eiseniae (strain EF01-2).